The chain runs to 257 residues: Aspartate/glutamate leucyltransferase (257 aa).

It belongs to the R-transferase family. Bpt subfamily.

Its subcellular location is the cytoplasm. It catalyses the reaction N-terminal L-glutamyl-[protein] + L-leucyl-tRNA(Leu) = N-terminal L-leucyl-L-glutamyl-[protein] + tRNA(Leu) + H(+). It carries out the reaction N-terminal L-aspartyl-[protein] + L-leucyl-tRNA(Leu) = N-terminal L-leucyl-L-aspartyl-[protein] + tRNA(Leu) + H(+). Functions in the N-end rule pathway of protein degradation where it conjugates Leu from its aminoacyl-tRNA to the N-termini of proteins containing an N-terminal aspartate or glutamate. In Phenylobacterium zucineum (strain HLK1), this protein is Aspartate/glutamate leucyltransferase.